Consider the following 826-residue polypeptide: Sister chromatid cohesion protein PDS5 homolog D (826 aa).

HEAT repeat units lie at residues 18–54 (GTNL…LSMQ), 55–94 (SALI…ITAP), 151–188 (DLIL…DETE), 189–226 (QVST…RCAR), and 230–267 (PYII…HSPV). Disordered regions lie at residues 261–551 (PKVH…EVES) and 640–826 (KKSK…KRKS). Basic and acidic residues-rich tracts occupy residues 269–286 (TKEH…KENL) and 296–309 (RHET…EKVR). Residues 281-288 (SRKENLSK) carry the Nuclear localization signal 1 motif. A compositionally biased stretch (polar residues) spans 311–323 (GNKSSLLKQSLKQ). A Nuclear localization signal 2 motif is present at residues 357–364 (GKRDPLKT). Residues 396 to 408 (SPATSSRSLTGSL) are compositionally biased toward polar residues. The HEAT 6 repeat unit spans residues 424 to 461 (SLSSPRLKKLASCFRDEEPNQEDDRKIGNSSKQTRSKN). A compositionally biased stretch (basic and acidic residues) spans 437 to 450 (FRDEEPNQEDDRKI). Polar residues predominate over residues 451–460 (GNSSKQTRSK). Positions 644-663 (NVAVSVEPTSSSGVRSSSRT) are enriched in low complexity. The segment covering 665–701 (MKKDCGKRLNKQVEKTREGKNLRSLKELNAETDRTAE) has biased composition (basic and acidic residues). Residues 702–724 (EQEVSLEAESDDRSEEQEYEDDC) show a composition bias toward acidic residues. The segment covering 725 to 746 (SDKKEQSQDKGVEAETKEEEKQ) has biased composition (basic and acidic residues). Acidic residues-rich tracts occupy residues 752–763 (GESEGEDSESEE), 771–800 (DDME…EVDD), and 811–826 (EKEE…KRKS). Residues 770 to 825 (TDDMEDDEEEEEEEIDHMEDEAEEEKEEVDDKEASANMSEIEKEEEEEEEDEEKRK) adopt a coiled-coil conformation.

Belongs to the PDS5 family. Interacts with the cohesin complex.

The protein resides in the nucleus. In terms of biological role, cohesin cofactor dispensable during the meiotic division but playing an important role in DNA repair by homologous recombination (HR) probably by helping SMC5/SMC6 complex. Regulator of sister chromatid cohesion in mitosis which may stabilize cohesin complex association with chromatin. May couple sister chromatid cohesion during mitosis to DNA replication. Cohesion ensures that chromosome partitioning is accurate in both meiotic and mitotic cells and plays an important role in DNA repair. This is Sister chromatid cohesion protein PDS5 homolog D from Arabidopsis thaliana (Mouse-ear cress).